A 168-amino-acid polypeptide reads, in one-letter code: Transcription antitermination protein NusB (168 aa).

The protein belongs to the NusB family.

Involved in transcription antitermination. Required for transcription of ribosomal RNA (rRNA) genes. Binds specifically to the boxA antiterminator sequence of the ribosomal RNA (rrn) operons. The protein is Transcription antitermination protein NusB of Brucella anthropi (strain ATCC 49188 / DSM 6882 / CCUG 24695 / JCM 21032 / LMG 3331 / NBRC 15819 / NCTC 12168 / Alc 37) (Ochrobactrum anthropi).